Here is a 46-residue protein sequence, read N- to C-terminus: Photosystem II reaction center protein K (46 aa).

A propeptide spanning residues 1 to 9 (MSTLPILLA) is cleaved from the precursor. Residues 25–45 (LPSIPVLFLLLAFVWQAAVSF) traverse the membrane as a helical segment.

Belongs to the PsbK family. As to quaternary structure, PSII is composed of 1 copy each of membrane proteins PsbA, PsbB, PsbC, PsbD, PsbE, PsbF, PsbH, PsbI, PsbJ, PsbK, PsbL, PsbM, PsbT, PsbX, PsbY, PsbZ, Psb30/Ycf12, at least 3 peripheral proteins of the oxygen-evolving complex and a large number of cofactors. It forms dimeric complexes.

The protein localises to the plastid. It is found in the chloroplast thylakoid membrane. In terms of biological role, one of the components of the core complex of photosystem II (PSII). PSII is a light-driven water:plastoquinone oxidoreductase that uses light energy to abstract electrons from H(2)O, generating O(2) and a proton gradient subsequently used for ATP formation. It consists of a core antenna complex that captures photons, and an electron transfer chain that converts photonic excitation into a charge separation. The protein is Photosystem II reaction center protein K of Nephroselmis olivacea (Green alga).